Here is a 410-residue protein sequence, read N- to C-terminus: 45 kDa immediate-early protein 2 (410 aa).

Residues 36–166 (SEEEQGEEVE…SKRISELDNE (131 aa)) are disordered. Composition is skewed to low complexity over residues 47-67 (RGATASSPSTGSGTPRVTSPT), 90-101 (SSSSSSCSSASD), and 132-147 (AASSSLLSCGHQSSGG). The segment at 257–283 (VRCRLGTMCNLALSTPFLMEHTMPVTH) is a zinc-finger region.

Activates the E1.7 promoter. This activation is augmented by the IE1 protein. It down-regulates the transcription of genes under the control of the major IE promoter. This Homo sapiens (Human) protein is 45 kDa immediate-early protein 2 (UL122).